The following is a 206-amino-acid chain: Small ribosomal subunit protein uS4 (206 aa).

The 61-residue stretch at 96-156 (GRLDNVVYRM…EKSKKQSRIK (61 aa)) folds into the S4 RNA-binding domain.

The protein belongs to the universal ribosomal protein uS4 family. As to quaternary structure, part of the 30S ribosomal subunit. Contacts protein S5. The interaction surface between S4 and S5 is involved in control of translational fidelity.

Its function is as follows. One of the primary rRNA binding proteins, it binds directly to 16S rRNA where it nucleates assembly of the body of the 30S subunit. In terms of biological role, with S5 and S12 plays an important role in translational accuracy. The sequence is that of Small ribosomal subunit protein uS4 from Photorhabdus laumondii subsp. laumondii (strain DSM 15139 / CIP 105565 / TT01) (Photorhabdus luminescens subsp. laumondii).